The chain runs to 141 residues: Large ribosomal subunit protein uL13 (141 aa).

This sequence belongs to the universal ribosomal protein uL13 family. Part of the 50S ribosomal subunit.

Its function is as follows. This protein is one of the early assembly proteins of the 50S ribosomal subunit, although it is not seen to bind rRNA by itself. It is important during the early stages of 50S assembly. The protein is Large ribosomal subunit protein uL13 of Deinococcus deserti (strain DSM 17065 / CIP 109153 / LMG 22923 / VCD115).